A 522-amino-acid chain; its full sequence is Neuropeptide FF receptor 2 (522 aa).

Residues 1–147 are Extracellular-facing; it reads MNSFFGTPAA…NYYLHQPQVA (147 aa). Residues 25-49 are disordered; it reads KEAGRERRALSVQQRGGPAWSGSLE. N-linked (GlcNAc...) asparagine glycans are attached at residues Asn110, Asn122, and Asn133. Residues 148–168 traverse the membrane as a helical segment; that stretch reads AIFIISYFLIFFLCMMGNTVV. Residues 169 to 184 are Cytoplasmic-facing; sequence CFIVMRNKHMHTVTNL. A helical transmembrane segment spans residues 185–205; sequence FILNLAISDLLVGIFCMPITL. Over 206 to 221 the chain is Extracellular; that stretch reads LDNIIAGWPFGNTMCK. An intrachain disulfide couples Cys220 to Cys308. Residues 222 to 242 form a helical membrane-spanning segment; that stretch reads ISGLVQGISVAASVFTLVAIA. Residues 243–262 are Cytoplasmic-facing; it reads VDRFQCVVYPFKPKLTIKTA. Residues 263 to 283 traverse the membrane as a helical segment; the sequence is FVIIMIIWVLAITIMSPSAVM. At 284-319 the chain is on the extracellular side; that stretch reads LHVQEEKYYRVRLNSQNKTSPVYWCREDWPNQEMRK. N-linked (GlcNAc...) asparagine glycosylation occurs at Asn300. The chain crosses the membrane as a helical span at residues 320–340; sequence IYTTVLFANIYLAPLSLIVIM. Residues 341 to 377 lie on the Cytoplasmic side of the membrane; the sequence is YGRIGISLFRAAVPHTGRKNQEQWHVVSRKKQKIIKM. Residues 378-398 form a helical membrane-spanning segment; it reads LLIVALLFILSWLPLWTLMML. The Extracellular segment spans residues 399 to 413; sequence SDYADLSPNELQIIN. The helical transmembrane segment at 414–434 threads the bilayer; that stretch reads IYIYPFAHWLAFGNSSVNPII. The Cytoplasmic portion of the chain corresponds to 435-522; that stretch reads YGFFNENFRR…LKETTNSSEI (88 aa).

This sequence belongs to the G-protein coupled receptor 1 family. In terms of tissue distribution, isoform 1 is abundant in placenta. Relatively highly expressed in thymus, testis, and small intestine. Expressed at low levels in several tissues including spleen, prostate, brain, heart, ovary, colon, kidney, lung, liver and pancreas and not expressed in skeletal muscle and leukocytes. Isoform 2 expression is highest in placenta (but at relatively low level compared to isoform 1). Very low level of expression in numerous tissues including adipose tissue and many brain regions. Isoform 3 is expressed in brain and heart and, at lower levels, in kidney, liver, lung and pancreas.

The protein localises to the cell membrane. Functionally, receptor for NPAF (A-18-F-amide) and NPFF (F-8-F-amide) neuropeptides, also known as morphine-modulating peptides. Can also be activated by a variety of naturally occurring or synthetic FMRF-amide like ligands. This receptor mediates its action by association with G proteins that activate a phosphatidylinositol-calcium second messenger system. This is Neuropeptide FF receptor 2 from Homo sapiens (Human).